The chain runs to 197 residues: Putative eggshell protein (197 aa).

A signal peptide spans 1 to 17 (MKFHLVLLLAIVPLTLA).

The polypeptide is Putative eggshell protein (Fasciola hepatica (Liver fluke)).